A 324-amino-acid polypeptide reads, in one-letter code: Mitochondrial thiamine pyrophosphate carrier 1 (324 aa).

3 Solcar repeats span residues 12 to 110, 119 to 205, and 212 to 307; these read GNRI…ISSA, PQPV…LRSP, and PFGT…VLGL. 6 consecutive transmembrane segments (helical) span residues 15 to 35, 79 to 99, 125 to 145, 182 to 202, 218 to 238, and 282 to 299; these read IQVV…VAPL, ITGL…YGGI, FISG…LDLL, TAAI…YEAL, AGAG…LDLV, and GLTV…VTMW.

This sequence belongs to the mitochondrial carrier (TC 2.A.29) family.

Its subcellular location is the mitochondrion inner membrane. Functionally, mitochondrial transporter that mediates uptake of thiamine pyrophosphate (ThPP) into mitochondria. In Ajellomyces capsulatus (strain NAm1 / WU24) (Darling's disease fungus), this protein is Mitochondrial thiamine pyrophosphate carrier 1 (TPC1).